A 119-amino-acid chain; its full sequence is uncharacterized protein (119 aa).

Residues Leu67 to Asn119 are disordered. Positions Pro95–Val104 are enriched in polar residues.

This is an uncharacterized protein from Anabaena variabilis.